A 723-amino-acid polypeptide reads, in one-letter code: Fatty acid oxidation complex subunit alpha (723 aa).

Residues 1 to 189 (MIYQAETLQV…KIGLLDAVVD (189 aa)) are enoyl-CoA hydratase/isomerase. Aspartate 296 is a binding site for substrate. Residues 311 to 723 (SKDTQRAAVL…FYGAQQQGSI (413 aa)) form a 3-hydroxyacyl-CoA dehydrogenase region. NAD(+)-binding positions include methionine 325, aspartate 344, 401–403 (VVE), lysine 408, and serine 430. The active-site For 3-hydroxyacyl-CoA dehydrogenase activity is histidine 451. NAD(+) is bound at residue asparagine 454. Substrate-binding residues include asparagine 501 and tyrosine 661.

In the N-terminal section; belongs to the enoyl-CoA hydratase/isomerase family. The protein in the C-terminal section; belongs to the 3-hydroxyacyl-CoA dehydrogenase family. As to quaternary structure, heterotetramer of two alpha chains (FadB) and two beta chains (FadA).

The enzyme catalyses a (3S)-3-hydroxyacyl-CoA + NAD(+) = a 3-oxoacyl-CoA + NADH + H(+). It carries out the reaction a (3S)-3-hydroxyacyl-CoA = a (2E)-enoyl-CoA + H2O. It catalyses the reaction a 4-saturated-(3S)-3-hydroxyacyl-CoA = a (3E)-enoyl-CoA + H2O. The catalysed reaction is (3S)-3-hydroxybutanoyl-CoA = (3R)-3-hydroxybutanoyl-CoA. The enzyme catalyses a (3Z)-enoyl-CoA = a 4-saturated (2E)-enoyl-CoA. It carries out the reaction a (3E)-enoyl-CoA = a 4-saturated (2E)-enoyl-CoA. It functions in the pathway lipid metabolism; fatty acid beta-oxidation. Involved in the aerobic and anaerobic degradation of long-chain fatty acids via beta-oxidation cycle. Catalyzes the formation of 3-oxoacyl-CoA from enoyl-CoA via L-3-hydroxyacyl-CoA. It can also use D-3-hydroxyacyl-CoA and cis-3-enoyl-CoA as substrate. The sequence is that of Fatty acid oxidation complex subunit alpha from Vibrio campbellii (strain ATCC BAA-1116).